Reading from the N-terminus, the 510-residue chain is NAD(P)H-quinone oxidoreductase subunit 2 A, chloroplastic (510 aa).

13 consecutive transmembrane segments (helical) span residues 24–44 (LLLFDGSFIFPECILIFGLIL), 57–77 (MPWLYFISSTSLVMSITALLF), 99–119 (IFQFLILLCSTLCIPLSVEYI), 124–144 (MAITEFLLFVLTATLGGMFLC), 149–169 (LITIFVAPECFSLCSYLLSGY), 183–203 (YLLMGGASSSILVHGFSWLYG), 227–247 (PGISIALIFITVGIGFKLSPA), 295–315 (WHLLLEILAILSMIVGNLIAI), 323–343 (MLAYSSIGQIGYVIIGIIVGD), 354–374 (YMLFYISMNLGTFACIVLFGL), 395–415 (ALSLALCLLSLGGLPPLAGFF), 418–438 (LHLFWCGWQAGLYFLVSIGLL), and 482–502 (LSMIVCVIASTIPGISMSPII).

It belongs to the complex I subunit 2 family. As to quaternary structure, NDH is composed of at least 16 different subunits, 5 of which are encoded in the nucleus.

The protein localises to the plastid. The protein resides in the chloroplast thylakoid membrane. The enzyme catalyses a plastoquinone + NADH + (n+1) H(+)(in) = a plastoquinol + NAD(+) + n H(+)(out). The catalysed reaction is a plastoquinone + NADPH + (n+1) H(+)(in) = a plastoquinol + NADP(+) + n H(+)(out). In terms of biological role, NDH shuttles electrons from NAD(P)H:plastoquinone, via FMN and iron-sulfur (Fe-S) centers, to quinones in the photosynthetic chain and possibly in a chloroplast respiratory chain. The immediate electron acceptor for the enzyme in this species is believed to be plastoquinone. Couples the redox reaction to proton translocation, and thus conserves the redox energy in a proton gradient. This chain is NAD(P)H-quinone oxidoreductase subunit 2 A, chloroplastic, found in Populus trichocarpa (Western balsam poplar).